The sequence spans 182 residues: Large ribosomal subunit protein uL5 (182 aa).

Belongs to the universal ribosomal protein uL5 family. As to quaternary structure, part of the 50S ribosomal subunit; part of the 5S rRNA/L5/L18/L25 subcomplex. Contacts the 5S rRNA and the P site tRNA. Forms a bridge to the 30S subunit in the 70S ribosome.

Functionally, this is one of the proteins that bind and probably mediate the attachment of the 5S RNA into the large ribosomal subunit, where it forms part of the central protuberance. In the 70S ribosome it contacts protein S13 of the 30S subunit (bridge B1b), connecting the 2 subunits; this bridge is implicated in subunit movement. Contacts the P site tRNA; the 5S rRNA and some of its associated proteins might help stabilize positioning of ribosome-bound tRNAs. This is Large ribosomal subunit protein uL5 from Borrelia hermsii (strain HS1 / DAH).